The primary structure comprises 823 residues: Dolichyl-diphosphooligosaccharide--protein glycosyltransferase subunit STT3B (823 aa).

The disordered stretch occupies residues 1–58 (MAEPSAPESKHKSSLNSSPWSGLMALGNSRHGHHGPGTQSASSAAAPKPGPPAGLSGG). At Ala-2 the chain carries N-acetylalanine. Over 2-41 (AEPSAPESKHKSSLNSSPWSGLMALGNSRHGHHGPGTQSA) the chain is Cytoplasmic. Phosphoserine occurs at positions 13, 18, and 29. The chain crosses the membrane as a helical span at residues 42-83 (SSAAAPKPGPPAGLSGGLSQPAGWQSLLSFTILFLAWLAGFS). The Lumenal segment spans residues 84 to 170 (SRLFAVIRFE…VHIRDVCVFL (87 aa)). Residues 98–100 (EFD) carry the DXD motif 1 motif. Position 100 (Asp-100) interacts with Mn(2+). A helical membrane pass occupies residues 171–189 (APTFSGLTSISTFLLTREL). The Cytoplasmic segment spans residues 190 to 191 (WN). Residues 192-209 (QGAGLLAACFIAIVPGYI) form a helical membrane-spanning segment. Topologically, residues 210–220 (SRSVAGSFDNE) are lumenal. Mn(2+)-binding residues include Asp-218 and Glu-220. A DXD motif 2 motif is present at residues 218 to 220 (DNE). Residues 221–240 (GIAIFALQFTYYLWVKSVKT) form a helical membrane-spanning segment. At 241–242 (GS) the chain is on the cytoplasmic side. The chain crosses the membrane as a helical span at residues 243 to 257 (VFWTMCCCLSYFYMV). Residues 258 to 262 (SAWGG) are Lumenal-facing. Residues 263 to 279 (YVFIINLIPLHVFVLLL) traverse the membrane as a helical segment. Topologically, residues 280–284 (MQRYS) are cytoplasmic. A helical membrane pass occupies residues 285–310 (KRVYIAYSTFYIVGLILSMQIPFVGF). Residues 311-318 (QPIRTSEH) lie on the Lumenal side of the membrane. A helical transmembrane segment spans residues 319-338 (MAAAGVFALLQAYAFLQYLR). Residues 339–347 (DRLTKQEFQ) lie on the Cytoplasmic side of the membrane. A helical membrane pass occupies residues 348–368 (TLFFLGVSLAAGAVFLSVIYL). The Lumenal portion of the chain corresponds to 369 to 407 (TYTGYIAPWSGRFYSLWDTGYAKIHIPIIASVSEHQPTT). The SVSE motif signature appears at 399-402 (SVSE). Residues 408-430 (WVSFFFDLHILVCTFPAGLWFCI) traverse the membrane as a helical segment. At 431-436 (KNINDE) the chain is on the cytoplasmic side. Residues 437-453 (RVFVALYAISAVYFAGV) traverse the membrane as a helical segment. The Lumenal portion of the chain corresponds to 454–457 (MVRL). Arg-456 is a dolichyl diphosphooligosaccharide binding site. A helical transmembrane segment spans residues 458–479 (MLTLTPVVCMLSAIAFSNVFEH). Residues 480-523 (YLGDDMKRENPPVEDSSDEDDKRNPGNLYDKAGKVRKHVTEQEK) lie on the Cytoplasmic side of the membrane. Residues 487–526 (RENPPVEDSSDEDDKRNPGNLYDKAGKVRKHVTEQEKPEE) are disordered. Ser-495 and Ser-496 each carry phosphoserine. Basic and acidic residues predominate over residues 517 to 526 (HVTEQEKPEE). The chain crosses the membrane as a helical span at residues 524–549 (PEEGLGPNIKSIVTMLMLMLLMMFAV). Residues 550-823 (HCTWVTSNAY…KGKKTSKKTV (274 aa)) are Lumenal-facing. Positions 601-603 (WWD) are interacts with target acceptor peptide in protein substrate. Positions 601-605 (WWDYG) match the WWDYG motif motif. Dolichyl diphosphooligosaccharide is bound at residue Tyr-606. N-linked (GlcNAc...) asparagine glycans are attached at residues Asn-613 and Asn-620. Asn-624 carries N-linked (GlcNAc...) (high mannose) asparagine glycosylation. A glycan (N-linked (GlcNAc...) asparagine) is linked at Asn-638. Residues 668-675 (DINKFLWM) carry the DK motif motif.

Belongs to the STT3 family. In terms of assembly, component of the oligosaccharyltransferase (OST) complex. There are 2 OST complexes, OST-A and OST-B, which contain STT3A or STT3B as catalytic subunit, respectively. OST-A and OST-B contain common core subunits RPN1, RPN2, OST48, OST4, DAD1 and TMEM258, and OST-B contains either MAGT1 or TUSC3 as specific accessory subunit. Requires Mg(2+) as cofactor. Mn(2+) is required as a cofactor.

It localises to the endoplasmic reticulum membrane. It catalyses the reaction a di-trans,poly-cis-dolichyl diphosphooligosaccharide + L-asparaginyl-[protein] = N(4)-(oligosaccharide-(1-&gt;4)-N-acetyl-beta-D-glucosaminyl-(1-&gt;4)-N-acetyl-beta-D-glucosaminyl)-L-asparaginyl-[protein] + a di-trans,poly-cis-dolichyl diphosphate + H(+). Its pathway is protein modification; protein glycosylation. Catalytic subunit of the oligosaccharyl transferase (OST) complex that catalyzes the initial transfer of a defined glycan (Glc(3)Man(9)GlcNAc(2) in eukaryotes) from the lipid carrier dolichol-pyrophosphate to an asparagine residue within an Asn-X-Ser/Thr consensus motif in nascent polypeptide chains, the first step in protein N-glycosylation. N-glycosylation occurs cotranslationally and the complex associates with the Sec61 complex at the channel-forming translocon complex that mediates protein translocation across the endoplasmic reticulum (ER). All subunits are required for a maximal enzyme activity. This subunit contains the active site and the acceptor peptide and donor lipid-linked oligosaccharide (LLO) binding pockets. STT3B is present in a small subset of OST complexes and mediates both cotranslational and post-translational N-glycosylation of target proteins: STT3B-containing complexes are required for efficient post-translational glycosylation and while they are less competent than STT3A-containing complexes for cotranslational glycosylation, they have the ability to mediate glycosylation of some nascent sites that are not accessible for STT3A. STT3B-containing complexes also act post-translationally and mediate modification of skipped glycosylation sites in unfolded proteins. Plays a role in ER-associated degradation (ERAD) pathway that mediates ubiquitin-dependent degradation of misfolded endoplasmic reticulum proteins by mediating N-glycosylation of unfolded proteins, which are then recognized by the ERAD pathway and targeted for degradation. This chain is Dolichyl-diphosphooligosaccharide--protein glycosyltransferase subunit STT3B, found in Mus musculus (Mouse).